The following is a 404-amino-acid chain: Argininosuccinate synthase (404 aa).

Residue Ala-9–Ser-17 coordinates ATP. An L-citrulline-binding site is contributed by Tyr-86. ATP is bound at residue Gly-116. L-aspartate contacts are provided by Thr-118, Asn-122, and Asp-123. An L-citrulline-binding site is contributed by Asn-122. 5 residues coordinate L-citrulline: Arg-126, Ser-174, Ser-183, Glu-259, and Tyr-271.

It belongs to the argininosuccinate synthase family. Type 1 subfamily. As to quaternary structure, homotetramer.

Its subcellular location is the cytoplasm. The enzyme catalyses L-citrulline + L-aspartate + ATP = 2-(N(omega)-L-arginino)succinate + AMP + diphosphate + H(+). The protein operates within amino-acid biosynthesis; L-arginine biosynthesis; L-arginine from L-ornithine and carbamoyl phosphate: step 2/3. The sequence is that of Argininosuccinate synthase from Listeria monocytogenes serotype 4b (strain CLIP80459).